The following is a 320-amino-acid chain: Probable cell division protein WhiA (320 aa).

The segment at residues Thr-276–Ala-310 is a DNA-binding region (H-T-H motif).

This sequence belongs to the WhiA family.

Its function is as follows. Involved in cell division and chromosome segregation. The polypeptide is Probable cell division protein WhiA (Halalkalibacterium halodurans (strain ATCC BAA-125 / DSM 18197 / FERM 7344 / JCM 9153 / C-125) (Bacillus halodurans)).